Here is a 351-residue protein sequence, read N- to C-terminus: Dihydroorotate dehydrogenase (quinone) (351 aa).

Residues 61 to 65 (AGLDK) and Thr-85 each bind FMN. Lys-65 contacts substrate. 110-114 (NRMGF) lines the substrate pocket. 2 residues coordinate FMN: Asn-139 and Asn-172. Asn-172 contributes to the substrate binding site. Catalysis depends on Ser-175, which acts as the Nucleophile. Asn-177 is a substrate binding site. Positions 217 and 245 each coordinate FMN. 246-247 (NT) is a substrate binding site. Residues Gly-268, Gly-297, and 318 to 319 (YT) each bind FMN.

This sequence belongs to the dihydroorotate dehydrogenase family. Type 2 subfamily. Monomer. Requires FMN as cofactor.

It localises to the cell membrane. The enzyme catalyses (S)-dihydroorotate + a quinone = orotate + a quinol. It participates in pyrimidine metabolism; UMP biosynthesis via de novo pathway; orotate from (S)-dihydroorotate (quinone route): step 1/1. Functionally, catalyzes the conversion of dihydroorotate to orotate with quinone as electron acceptor. The polypeptide is Dihydroorotate dehydrogenase (quinone) (Xylella fastidiosa (strain M12)).